A 234-amino-acid chain; its full sequence is (5-formylfuran-3-yl)methyl phosphate synthase (234 aa).

Residue Lys-27 is the Schiff-base intermediate with substrate of the active site. Catalysis depends on Lys-85, which acts as the Proton acceptor.

It belongs to the MfnB family.

It catalyses the reaction 2 D-glyceraldehyde 3-phosphate = 4-(hydroxymethyl)-2-furancarboxaldehyde phosphate + phosphate + 2 H2O. It functions in the pathway cofactor biosynthesis; methanofuran biosynthesis. In terms of biological role, catalyzes the formation of 4-(hydroxymethyl)-2-furancarboxaldehyde phosphate (4-HFC-P) from two molecules of glyceraldehyde-3-P (GA-3-P). The sequence is that of (5-formylfuran-3-yl)methyl phosphate synthase from Methanosarcina acetivorans (strain ATCC 35395 / DSM 2834 / JCM 12185 / C2A).